Consider the following 647-residue polypeptide: Putative ankyrin repeat protein L764 (647 aa).

ANK repeat units follow at residues 123 to 154 (LKDR…QINL), 202 to 231 (LTQE…EYDL), 233 to 256 (EIIN…SLNE), 258 to 284 (NVNI…TINS), 289 to 319 (SMFS…DLTV), 348 to 377 (DCNL…DLKK), 401 to 431 (NDVN…NIDL), 529 to 558 (FILK…DNNE), and 588 to 617 (NGQN…DVKN).

This is Putative ankyrin repeat protein L764 from Acanthamoeba polyphaga (Amoeba).